We begin with the raw amino-acid sequence, 673 residues long: Putative K(+)-stimulated pyrophosphate-energized sodium pump (673 aa).

The next 5 helical transmembrane spans lie at 3–23 (SFIVYSVLAGVIALIFAFMLS), 62–82 (IVIVTVILAIFVGWQTAACFI), 84–104 (GAIFSIFAGYFGMNVATKANV), 127–147 (VMGMSVVGLGVVGIGIMYYIF), and 154–174 (VTGFGLGASSIALFARVGGGI). Lys177 serves as a coordination point for substrate. Asp180, Asp184, Asn207, and Asp210 together coordinate Mg(2+). A run of 6 helical transmembrane segments spans residues 222 to 242 (LFESYVGSIISALTLGTVVYA), 247 to 267 (VMFPLILSSIGIVASIIGILF), 279 to 299 (ALNTGTYIGGIIVIVSAAILS), 302 to 322 (IFGNLKAFFAVASGLVVGMII), 364 to 384 (LWPIVLISIGVLVSFFVMGGG), and 387 to 407 (AMVGLYGISLAAVGMLSTTGL). Asp419 provides a ligand contact to Mg(2+). 4 helical membrane passes run 449–469 (AAIGKGFAIGSAALTALSLFA), 486–506 (VTLVGLFIGAMLPFLFGALTM), 553–573 (EMILPGVLAIVVPVAMGLLLG), and 576–596 (ALGGLLAGALVSGVLVGILMS). The Ca(2+) site is built by Asp603, Asp629, and Asp633. Residue Lys636 participates in substrate binding. A helical transmembrane segment spans residues 652–672 (IVSLVFAPVVLQYGGILLNLI).

It belongs to the H(+)-translocating pyrophosphatase (TC 3.A.10) family. K(+)-stimulated subfamily. In terms of assembly, homodimer. Requires Mg(2+) as cofactor.

The protein resides in the cell membrane. It carries out the reaction Na(+)(in) + diphosphate + H2O = Na(+)(out) + 2 phosphate + H(+). With respect to regulation, requires K(+) for maximal activity. Sodium pump that utilizes the energy of pyrophosphate hydrolysis as the driving force for Na(+) movement across the membrane. The polypeptide is Putative K(+)-stimulated pyrophosphate-energized sodium pump (Clostridium tetani (strain Massachusetts / E88)).